Here is a 176-residue protein sequence, read N- to C-terminus: Nuclear ribonuclease Z (176 aa).

Belongs to the RNase Z family. In terms of assembly, homodimer. Zn(2+) serves as cofactor.

It localises to the nucleus. It carries out the reaction Endonucleolytic cleavage of RNA, removing extra 3' nucleotides from tRNA precursor, generating 3' termini of tRNAs. A 3'-hydroxy group is left at the tRNA terminus and a 5'-phosphoryl group is left at the trailer molecule.. Its function is as follows. Zinc phosphodiesterase, which displays some tRNA 3'-processing endonuclease activity. Probably involved in tRNA maturation, by removing a 3'-trailer from precursor tRNA. The chain is Nuclear ribonuclease Z (ELAC) from Triticum aestivum (Wheat).